The primary structure comprises 862 residues: Switch 2 (862 aa).

2 disordered regions span residues 13–43 (PCGS…SSLS) and 58–95 (KHES…DDER). The span at 16–27 (SFPSSSSLRVSS) shows a compositional bias: low complexity. The span at 58–84 (KHESKISKTQVEDFDHNEDDHKRNIKF) shows a compositional bias: basic and acidic residues. Residues 85 to 95 (DEEEVDEDDER) show a composition bias toward acidic residues. The region spanning 151–323 (YNLYKNNHGG…FNLFEWVAPG (173 aa)) is the Helicase ATP-binding domain. 164 to 171 (DDMGLGKT) serves as a coordination point for ATP. A DEAH box motif is present at residues 274–277 (DEAH). Positions 274 to 294 (DEAHRLKNEKSKLYEACLEIK) form a coiled coil. One can recognise a Helicase C-terminal domain in the interval 532-685 (ALEKLMASWI…VAGKMETRYF (154 aa)). Over residues 782–793 (TTSTSQRLNGDG) the composition is skewed to polar residues. Residues 782–821 (TTSTSQRLNGDGNSADRKKKKRKGCSEEEDMSSSNREQKR) form a disordered region.

Belongs to the SNF2/RAD54 helicase family.

Its function is as follows. May be involved in early DNA damage response. Probable chromatin remodeling factor. The polypeptide is Switch 2 (Arabidopsis thaliana (Mouse-ear cress)).